Here is a 389-residue protein sequence, read N- to C-terminus: Lipid-A-disaccharide synthase (389 aa).

It belongs to the LpxB family.

It carries out the reaction a lipid X + a UDP-2-N,3-O-bis[(3R)-3-hydroxyacyl]-alpha-D-glucosamine = a lipid A disaccharide + UDP + H(+). The protein operates within bacterial outer membrane biogenesis; LPS lipid A biosynthesis. Condensation of UDP-2,3-diacylglucosamine and 2,3-diacylglucosamine-1-phosphate to form lipid A disaccharide, a precursor of lipid A, a phosphorylated glycolipid that anchors the lipopolysaccharide to the outer membrane of the cell. The chain is Lipid-A-disaccharide synthase from Burkholderia vietnamiensis (strain G4 / LMG 22486) (Burkholderia cepacia (strain R1808)).